Reading from the N-terminus, the 459-residue chain is MVEGKIVQCIGAVIDVEFPRESMPKIYDALILEGSELTLEVQQQLGDGVVRTICLGASDGLRRGVVVKNTGNPISVPVGKPTLGRIMDVLGRPIDEAGPIESENKRSIHQKAPAFDELSPSTELLETGIKVIDLICPFAKGGKVGLFGGAGVGKTVNMMELINNIAKEHGGYSVFAGVGERTREGNDFYHEMKDSNVLDKVALVYGQMNEPPGNRLRVALTGLTMAEHFRDEGLDVLFFVDNIYRFTLAGTEVSALLGRMPSAVGYQPTLAEEMGKLQERITSTKKGSITSVQAVYVPADDLTDPSPATTFGHLDATVVLSRDIASLGIYPAVDPLDSTSRQIDPNVIGEEHYSITRRVQQTLQRYKELRDIIAILGMDELSPEDKLSVARARKIQRFLSQPFHVAEVFTGSPGKYVPLKETIRGFKMIVDGECDHLPEQAFYMVGTIDEAFEKAKKIQ.

Residue 148–155 (GGAGVGKT) coordinates ATP.

It belongs to the ATPase alpha/beta chains family. In terms of assembly, F-type ATPases have 2 components, CF(1) - the catalytic core - and CF(0) - the membrane proton channel. CF(1) has five subunits: alpha(3), beta(3), gamma(1), delta(1), epsilon(1). CF(0) has three main subunits: a(1), b(2) and c(9-12). The alpha and beta chains form an alternating ring which encloses part of the gamma chain. CF(1) is attached to CF(0) by a central stalk formed by the gamma and epsilon chains, while a peripheral stalk is formed by the delta and b chains.

It localises to the cell inner membrane. The catalysed reaction is ATP + H2O + 4 H(+)(in) = ADP + phosphate + 5 H(+)(out). Its function is as follows. Produces ATP from ADP in the presence of a proton gradient across the membrane. The catalytic sites are hosted primarily by the beta subunits. This chain is ATP synthase subunit beta, found in Burkholderia mallei (strain NCTC 10229).